A 371-amino-acid chain; its full sequence is Probable palmitoyltransferase ZDHHC11B (371 aa).

A run of 2 helical transmembrane segments spans residues 43 to 63 (VVTWAVFVGLSLATFRIFIPL) and 70 to 90 (YIAYVVTGGIFSFHLVVHLIA). The 51-residue stretch at 125–175 (QFCHLCKVTVNKKTKHCISCNKCVSGFDHHCKWINNCVGSRNYWFFFSTVA) folds into the DHHC domain. Catalysis depends on Cys155, which acts as the S-palmitoyl cysteine intermediate. 3 helical membrane-spanning segments follow: residues 177–197 (ATAGMLCLIAILLYVLVQYLV), 216–236 (TWLLFLPLFPVQVQTLIVVII), and 239–259 (LVLLLDLLGLVQLGQLLIFHI). The interval 335-371 (DGDSKAQEADDAPSTSTLGLQQETTEPMKTDSAESED) is disordered. Residues 347–359 (PSTSTLGLQQETT) show a composition bias toward polar residues. Over residues 360 to 371 (EPMKTDSAESED) the composition is skewed to basic and acidic residues.

The protein belongs to the DHHC palmitoyltransferase family.

The protein localises to the membrane. It catalyses the reaction L-cysteinyl-[protein] + hexadecanoyl-CoA = S-hexadecanoyl-L-cysteinyl-[protein] + CoA. Probable palmitoyltransferase that could catalyze the addition of palmitate onto various protein substrates and be involved in a variety of cellular processes. May play a role in cell proliferation. This Homo sapiens (Human) protein is Probable palmitoyltransferase ZDHHC11B.